The chain runs to 227 residues: Cytidylate kinase (227 aa).

7–15 (GPAGSGKST) contacts ATP.

This sequence belongs to the cytidylate kinase family. Type 1 subfamily.

The protein resides in the cytoplasm. The enzyme catalyses CMP + ATP = CDP + ADP. It carries out the reaction dCMP + ATP = dCDP + ADP. This chain is Cytidylate kinase, found in Salinibacter ruber (strain DSM 13855 / M31).